The sequence spans 398 residues: S-adenosylmethionine synthase (398 aa).

His16 contributes to the ATP binding site. A Mg(2+)-binding site is contributed by Asp18. Glu44 serves as a coordination point for K(+). L-methionine contacts are provided by Glu57 and Gln100. A flexible loop region spans residues 100-110 (QSPDIAQGVNE). Residues 175–177 (DAK), 242–243 (RF), Asp251, 257–258 (RK), Ala274, and Lys278 contribute to the ATP site. Asp251 serves as a coordination point for L-methionine. Lys282 is a binding site for L-methionine.

The protein belongs to the AdoMet synthase family. As to quaternary structure, homotetramer; dimer of dimers. Mg(2+) is required as a cofactor. It depends on K(+) as a cofactor.

Its subcellular location is the cytoplasm. The enzyme catalyses L-methionine + ATP + H2O = S-adenosyl-L-methionine + phosphate + diphosphate. It participates in amino-acid biosynthesis; S-adenosyl-L-methionine biosynthesis; S-adenosyl-L-methionine from L-methionine: step 1/1. In terms of biological role, catalyzes the formation of S-adenosylmethionine (AdoMet) from methionine and ATP. The overall synthetic reaction is composed of two sequential steps, AdoMet formation and the subsequent tripolyphosphate hydrolysis which occurs prior to release of AdoMet from the enzyme. This Streptococcus agalactiae serotype Ia (strain ATCC 27591 / A909 / CDC SS700) protein is S-adenosylmethionine synthase.